The sequence spans 540 residues: Putative sel1-like repeat-containing protein R815 (540 aa).

6 Sel1-like repeats span residues 129–164 (IDAQTNYGLVNEYGIGVKKNIKKAIKWYKLSCYKEN), 165–200 (LFGLLFLGSLYERGYGVSCDKHMAFNLYEKATKHNY), 201–236 (PAVKRQLAFMYRTGSGTTKNINKSHELYREAANQGY), 237–272 (PLAQYALALQCKYGHGCIKNYKEAETWLIRSYNNGC), 273–308 (LYATYSLARLYIETKSPLRNYSRAFELMQEAASENY), and 309–344 (LLAINYLAKIYKNGIGVNKNISRAIYWYYKAGNSTK).

The polypeptide is Putative sel1-like repeat-containing protein R815 (Acanthamoeba polyphaga (Amoeba)).